The sequence spans 244 residues: Protein pendolino (244 aa).

One can recognise a UBC core domain in the interval 20 to 176 (QQEYKILAEY…VQENIKESKE (157 aa)).

It belongs to the ubiquitin-conjugating enzyme family. FTS subfamily. In terms of assembly, interacts (via N-terminus) with cav/HOAP (via N-terminus); the interaction is direct. Probably interacts (via N-terminus and UBC domain) with ver and moi.

Its subcellular location is the nucleus. It localises to the nucleolus. The protein localises to the chromosome. In terms of biological role, required for efficient DNA replication, probably through involvement in telomere replication. May have a role in telomere capping of heterochromatic chromosome ends. In Drosophila melanogaster (Fruit fly), this protein is Protein pendolino.